The sequence spans 158 residues: Small ribosomal subunit protein uS9 (158 aa).

Belongs to the universal ribosomal protein uS9 family.

This Rhodopseudomonas palustris (strain BisA53) protein is Small ribosomal subunit protein uS9.